We begin with the raw amino-acid sequence, 148 residues long: Stathmin (148 aa).

Residues 4–145 (SDIQVKELEK…NKEGKDPGEA (142 aa)) form the SLD domain. Residue Ser16 is modified to Phosphoserine; by PKA. Phosphoserine; by CDK1 is present on Ser38. Residues 41-140 (KKKDLSLEEI…EEVRKNKEGK (100 aa)) are a coiled coil. Phosphoserine; by PKA is present on Ser63. The segment at 122 to 148 (RLREKDKHIEEVRKNKEGKDPGEAETN) is disordered.

Belongs to the stathmin family. In terms of assembly, binds to two alpha/beta-tubulin heterodimers. Many different phosphorylated forms are observed depending on specific combinations among the sites which can be phosphorylated. MAPK is responsible for the phosphorylation of stathmin in response to NGF.

It localises to the cytoplasm. It is found in the cytoskeleton. Its function is as follows. Involved in the regulation of the microtubule (MT) filament system by destabilizing microtubules. It prevents assembly and promotes disassembly of microtubules. In Gallus gallus (Chicken), this protein is Stathmin (STMN1).